Reading from the N-terminus, the 413-residue chain is Docking protein 2 (413 aa).

One can recognise a PH domain in the interval 4–114 (VVVKQGFLYL…WIQAICLLAF (111 aa)). The IRS-type PTB domain occupies 147–252 (PQKEFAVTVR…SAQKNAAPPG (106 aa)). The segment at 247 to 292 (NAAPPGPQTQPVPVPAVLPRPESPYARPHDSLPPPSPTVPVPTPRQ) is disordered. A compositionally biased stretch (pro residues) spans 250–268 (PPGPQTQPVPVPAVLPRPE). Phosphotyrosine is present on tyrosine 271. Over residues 277–289 (SLPPPSPTVPVPT) the composition is skewed to pro residues. 2 positions are modified to phosphotyrosine: tyrosine 300 and tyrosine 346. Over residues 362-381 (QEPRGEAWRRQATADRDSSG) the composition is skewed to basic and acidic residues. The disordered stretch occupies residues 362 to 383 (QEPRGEAWRRQATADRDSSGLK).

The protein belongs to the DOK family. Type A subfamily. In terms of assembly, interacts with phosphorylated RASGAP and EGFR. Interacts with RET and NCK. Interacts (via PH domain) with TEK/TIE2 (tyrosine phosphorylated). Post-translationally, on immunoreceptor stimulation, phosphorylated on C-terminal tyrosine residues. Phosphorylation on Tyr-346 is required for binding to the SH2 domain of NCK. Phosphorylation on both Tyr-271 and Tyr-300 is required for interaction with RASGAP. Phosphorylated on tyrosine residues by TEK/TIE2.

In terms of biological role, DOK proteins are enzymatically inert adaptor or scaffolding proteins. They provide a docking platform for the assembly of multimolecular signaling complexes. DOK2 may modulate the cellular proliferation induced by IL-4, as well as IL-2 and IL-3. May be involved in modulating Bcr-Abl signaling. Attenuates EGF-stimulated MAP kinase activation. The polypeptide is Docking protein 2 (DOK2) (Bos taurus (Bovine)).